A 134-amino-acid polypeptide reads, in one-letter code: NADH-quinone oxidoreductase subunit A 1 (134 aa).

A run of 3 helical transmembrane segments spans residues 10-30 (LIPL…LLLA), 65-85 (FYLI…ILAW), and 94-114 (IPGL…LVWL).

It belongs to the complex I subunit 3 family. As to quaternary structure, NDH-1 is composed of 14 different subunits. Subunits NuoA, H, J, K, L, M, N constitute the membrane sector of the complex.

The protein localises to the cell inner membrane. It carries out the reaction a quinone + NADH + 5 H(+)(in) = a quinol + NAD(+) + 4 H(+)(out). Functionally, NDH-1 shuttles electrons from NADH, via FMN and iron-sulfur (Fe-S) centers, to quinones in the respiratory chain. The immediate electron acceptor for the enzyme in this species is believed to be ubiquinone. Couples the redox reaction to proton translocation (for every two electrons transferred, four hydrogen ions are translocated across the cytoplasmic membrane), and thus conserves the redox energy in a proton gradient. The polypeptide is NADH-quinone oxidoreductase subunit A 1 (Citrifermentans bemidjiense (strain ATCC BAA-1014 / DSM 16622 / JCM 12645 / Bem) (Geobacter bemidjiensis)).